Here is a 489-residue protein sequence, read N- to C-terminus: MESLRDMVLPPGFGFHPKDTELISHYLKKKIHGQKIEYEIIPEVDIYKHEPWDLPAKCDVPTQDNKWHFFAARDRKYPNGSRSNRATVAGYWKSTGKDRAIKMGKQTIGTKKTLVFHEGRPPTGRRTEWIMHEYYIDERECQACPDMKDAYVLCRITKRNDWIPGNGNELDNSDPHPEPYDAPPSVISTEQLNPAAEPVVGVEAAPVTVAEPDGVTTSAITANIPSPSDDINLDDWLNELFDPFFDPEQSLASADLSPDEQNVESSNVGALAPKVEQDYSSPNENVVDDTEYLLPEDVYNILHPGTDDFNMLQNPLDQYPIQYATDVWSGIQKEELWSPQANAEPSQSNEAADNGIIRRYRSMKTPETSVPQFKGKTQAKMRVGINKMATSSSESINQTIKFENSGRLVEHQKNQAHDVASTKRSDAGKPSTELSSNRGFLRGIRNAFAGCSDARWNMILVAGFAIGVAVVALHIGQRLGLSQRDQQHT.

Residues 9–159 (LPPGFGFHPK…AYVLCRITKR (151 aa)) form the NAC domain. The DNA-binding element occupies 108–165 (IGTKKTLVFHEGRPPTGRRTEWIMHEYYIDERECQACPDMKDAYVLCRITKRNDWIPG). Residues 413–427 (KNQAHDVASTKRSDA) show a composition bias toward basic and acidic residues. The disordered stretch occupies residues 413–435 (KNQAHDVASTKRSDAGKPSTELS). The chain crosses the membrane as a helical span at residues 456–476 (WNMILVAGFAIGVAVVALHIG).

As to expression, widely expressed.

It is found in the nucleus. It localises to the cell membrane. Transcription activator involved in heat and endoplasmic reticulum (ER) stress responses. Regulates the expression of genes involved in ER protein folding and heat stress-responsive genes. Binds directly to the promoter of BZIP74 and regulates its expression in response to heat stress. This Oryza sativa subsp. japonica (Rice) protein is NAC domain-containing protein 74.